Here is a 359-residue protein sequence, read N- to C-terminus: Protein Wnt-8a (359 aa).

The signal sequence occupies residues 1-25 (MNPCQIFASLVMSICCHILSSTAWS). Cys55 and Cys66 are oxidised to a cystine. Asn104 carries N-linked (GlcNAc...) asparagine glycosylation. 10 disulfide bridges follow: Cys105–Cys113, Cys115–Cys133, Cys181–Cys195, Cys183–Cys190, Cys260–Cys298, Cys276–Cys291, Cys295–Cys337, Cys313–Cys328, Cys315–Cys325, and Cys320–Cys321. Ser187 is lipidated: O-palmitoleoyl serine. 2 N-linked (GlcNAc...) asparagine glycosylation sites follow: Asn263 and Asn282. N-linked (GlcNAc...) asparagine glycosylation occurs at Asn348.

Belongs to the Wnt family. Palmitoleoylation is required for efficient binding to frizzled receptors. Depalmitoleoylation leads to Wnt signaling pathway inhibition. Post-translationally, proteolytic processing by tiki1 and tiki2 promotes oxidation and formation of large disulfide-bond oligomers, leading to inactivation of wnt8. In terms of tissue distribution, expressed in the margin of the pregastrula embryo destined to be the future mesoderm.

It is found in the secreted. Its subcellular location is the extracellular space. The protein localises to the extracellular matrix. Ligand for members of the frizzled family of seven transmembrane receptors. Required for mesoderm and neural ectoderm patterning during gastrulation. Involved in axis formation during embryonic development, via activation of canonical Wnt/CTNNB1 signaling. May be involved in the specification of the spatial patterns of expression of Gsc and other regulatory genes leading to the establishment of the embryonic axis. The sequence is that of Protein Wnt-8a (wnt8a) from Danio rerio (Zebrafish).